The primary structure comprises 334 residues: Tetratricopeptide repeat protein 24 (334 aa).

TPR repeat units follow at residues Gly35–Pro68, Ala72–Val105, Gly112–Thr145, and Trp152–Glu185. The interval Pro220–Lys258 is disordered. Polar residues predominate over residues Ala233–Gln246.

The chain is Tetratricopeptide repeat protein 24 (Ttc24) from Mus musculus (Mouse).